The chain runs to 372 residues: Glutamate 5-kinase (372 aa).

Lysine 14 lines the ATP pocket. Serine 54, aspartate 141, and asparagine 153 together coordinate substrate. 173–174 is an ATP binding site; it reads TD. In terms of domain architecture, PUA spans 280–358; the sequence is RGHVVIDAGA…GEIETVLGYM (79 aa).

It belongs to the glutamate 5-kinase family.

The protein localises to the cytoplasm. The catalysed reaction is L-glutamate + ATP = L-glutamyl 5-phosphate + ADP. The protein operates within amino-acid biosynthesis; L-proline biosynthesis; L-glutamate 5-semialdehyde from L-glutamate: step 1/2. Catalyzes the transfer of a phosphate group to glutamate to form L-glutamate 5-phosphate. The protein is Glutamate 5-kinase of Burkholderia orbicola (strain AU 1054).